The chain runs to 153 residues: Endoribonuclease YbeY (153 aa).

Positions 113, 117, and 123 each coordinate Zn(2+).

Belongs to the endoribonuclease YbeY family. Zn(2+) is required as a cofactor.

The protein resides in the cytoplasm. Single strand-specific metallo-endoribonuclease involved in late-stage 70S ribosome quality control and in maturation of the 3' terminus of the 16S rRNA. This Aliivibrio fischeri (strain MJ11) (Vibrio fischeri) protein is Endoribonuclease YbeY.